Here is a 251-residue protein sequence, read N- to C-terminus: MSGHSKWATTKHKKAVVDARRGKLFAKLVKTVEVAAKTGGGDPAGNPTLADAIAKAKSQSVPNDNIERAIKRGSGELAGGVSYESVTYEAYGPNGVAVLVECLTDNRNRAASDVRVAITRNGGTPADPGSVSYLFNRKGVVLIDKTPTLTEDDILLAVLDAGAEEVNDVGEAFEVVSEATDLHAVRVAAAEADLTVASADISWLPSVSVPLDAEPARKVLKLVEALEDLDDVQNVWFNADISDDVMELVSS.

Belongs to the TACO1 family.

It localises to the cytoplasm. The protein is Probable transcriptional regulatory protein Franean1_5147 of Parafrankia sp. (strain EAN1pec).